A 1893-amino-acid polypeptide reads, in one-letter code: CDK5 regulatory subunit-associated protein 2 (1893 aa).

Positions 51 to 94 (TVSPTRARNMKDFENQITELKKENFNLKLRIYFLEERMQQEFHG) are CM1 motif; interacts with the gTuRC. An interaction with NCKAP5L region spans residues 58–196 (RNMKDFENQI…TEKALRLRLE (139 aa)). Phosphoserine is present on serine 547. The tract at residues 926–1208 (PGITNREAKK…LENLKQQLEE (283 aa)) is interaction with MAPRE1. Phosphothreonine is present on threonine 1001. Disordered regions lie at residues 1015 to 1071 (AAYQ…NPED) and 1084 to 1105 (SKSQ…SINT). Over residues 1034 to 1048 (WRDKEMDSDQQRSYE) the composition is skewed to basic and acidic residues. Serine 1238 is modified (phosphoserine). Positions 1347–1381 (LPESPEPSASHALSDYETSEKSFFSRDQKQDNETE) are disordered. A compositionally biased stretch (basic and acidic residues) spans 1364-1381 (TSEKSFFSRDQKQDNETE). Residue serine 1490 is modified to Phosphoserine. Composition is skewed to basic and acidic residues over residues 1500–1519 (SVKE…ERHN) and 1651–1661 (PDKHDGDKYPM). Disordered stretches follow at residues 1500–1521 (SVKE…HNQQ), 1646–1706 (EVPL…ATST), and 1754–1774 (QTQE…PHPA). A phosphoserine mark is found at serine 1663 and serine 1666. Composition is skewed to polar residues over residues 1663–1706 (SDNS…ATST) and 1754–1766 (QTQE…SQEL). The interval 1726–1768 (HVLGLIEDYEALLKQISQGQRLLAEMDIQTQEAPSSTSQELGT) is interaction with CDK5R1. Residues 1726–1893 (HVLGLIEDYE…GTCSPSRPGS (168 aa)) form an interaction with PCNT and AKAP9 region. Residues 1861–1870 (VVTHKILRKA) are required for centrosomal attachment, Golgi localization and CALM1 interaction. Position 1893 is a phosphoserine (serine 1893).

Homodimer. Interacts with CDK5R1 (p35 form). CDK5RAP1, CDK5RAP2 and CDK5RAP3 show competitive binding to CDK5R1. May form a complex with CDK5R1 and CDK5. Interacts with pericentrin/PCNT; the interaction is leading to centrosomal and Golgi localization of CDK5RAP2 and PCNT. Interacts with AKAP9; the interaction targets CDK5RAP2 and AKAP9 to Golgi apparatus. Interacts with MAPRE1; the interaction is direct and targets CDK5RAP2 and EB1/MAPRE1 to microtubule plus ends. Interacts with TUBG1; the interaction is leading to the centrosomal localization of CDK5RAP2 and TUBG1. Interacts with TUBGCP3. Interacts with CALM1. Interacts with CDC20. Interacts with CEP68; degradation of CEP68 in early mitosis leads to removal of CDK5RAP2 from the centrosome which promotes centriole disengagement and subsequent centriole separation. Interacts with NCKAP5L. Forms a pericentrosomal complex with AKAP9, MAPRE1 and PDE4DIP isoform 13/MMG8/SMYLE; within this complex, MAPRE1 binding to CDK5RAP2 may be mediated by PDE4DIP. Interacts with LGALS3BP; this interaction may connect the pericentrosomal complex to the gamma-tubulin ring complex (gTuRC) to promote microtubule assembly and acetylation. Interacts with CCDC66. Associates (via CM1 motif) with TUBGCP2 of the gTuRC; the interaction plays a role in gTuRC activation. Phosphorylated in vitro by CDK5. Widely expressed. Expressed in heart, brain, placenta, lung, liver, skeletal muscle, kidney and pancreas.

Its subcellular location is the cytoplasm. The protein resides in the cytoskeleton. It localises to the microtubule organizing center. The protein localises to the centrosome. It is found in the golgi apparatus. In terms of biological role, potential regulator of CDK5 activity via its interaction with CDK5R1. Negative regulator of centriole disengagement (licensing) which maintains centriole engagement and cohesion. Involved in regulation of mitotic spindle orientation. Plays a role in the spindle checkpoint activation by acting as a transcriptional regulator of both BUBR1 and MAD2 promoter. Together with EB1/MAPRE1, may promote microtubule polymerization, bundle formation, growth and dynamics at the plus ends. Regulates centrosomal maturation by recruitment of the gamma-tubulin ring complex (gTuRC) onto centrosomes. In complex with PDE4DIP isoform 13/MMG8/SMYLE, MAPRE1 and AKAP9, contributes to microtubules nucleation and extension from the centrosome to the cell periphery. Required for the recruitment of AKAP9 to centrosomes. Plays a role in neurogenesis. This is CDK5 regulatory subunit-associated protein 2 (CDK5RAP2) from Homo sapiens (Human).